The following is an 88-amino-acid chain: Acylphosphatase (88 aa).

The Acylphosphatase-like domain maps to 3 to 88; the sequence is AARFVVSGVV…VPPTEDFVTG (86 aa). Active-site residues include Arg-18 and Asn-36.

Belongs to the acylphosphatase family.

It carries out the reaction an acyl phosphate + H2O = a carboxylate + phosphate + H(+). The sequence is that of Acylphosphatase (acyP) from Xanthomonas euvesicatoria pv. vesicatoria (strain 85-10) (Xanthomonas campestris pv. vesicatoria).